The following is a 447-amino-acid chain: FAD-dependent monooxygenase tropB (447 aa).

The chain crosses the membrane as a helical span at residues proline 12–valine 32. The FAD site is built by glutamate 42, alanine 55, and arginine 124. An N-linked (GlcNAc...) asparagine glycan is attached at asparagine 153. Residues arginine 206 and tyrosine 239 contribute to the active site. Asparagine 243 carries an N-linked (GlcNAc...) asparagine glycan. Aspartate 322 and alanine 335 together coordinate FAD.

Belongs to the paxM FAD-dependent monooxygenase family. FAD is required as a cofactor.

The protein resides in the membrane. It functions in the pathway secondary metabolite biosynthesis. FAD-dependent monooxygenase; part of the gene cluster that mediates the biosynthesis of the tropolone class of fungal maleic anhydrides. Within the pathway, tropB catalyzes a synthetically challenging asymmetric oxidative dearomatization reaction to convert 3-methylorcinaldehyde into a hydroxycyclohexadione. The pathway begins with the synthesis of 3-methylorcinaldehyde by the non-reducing polyketide synthase (PKS) tropA. 3-methylorcinaldehyde is the substrate for the FAD-dependent monooxygenase tropB to yield a dearomatized hydroxycyclohexadione. The 2-oxoglutarate-dependent dioxygenase tropC then performs the oxidative ring expansion to provide the first tropolone metabolite stipitaldehyde. Trop D converts stipitaldehyde into stipitacetal which is in turn converted to stipitalide by the short-chain dehydrogenase/reductase tropE. The next steps involve tropF, tropG, tropH, tropI and tropJ to form successive tropolone maleic anhydrides including stipitaldehydic, stipitatonic and stipitatic acids. This Talaromyces stipitatus (strain ATCC 10500 / CBS 375.48 / QM 6759 / NRRL 1006) (Penicillium stipitatum) protein is FAD-dependent monooxygenase tropB.